We begin with the raw amino-acid sequence, 204 residues long: MPNQSRPKVKKSRALGIALTPKAVKYFEARPYPPGEHGRGRKQNSDYKVRLLEKQRLRAQYDISERQMARAYDRAKKAEGKTGEALVVELERRLDALVLRSGIARTIYQARQMVVHGHIEVNGGKVDKPSFRVRPDDIVQVRERSRSKVPFQVAREGGYDTDGETPRYLQVNLKALAFRLDRDPNRKEIPVICDEQLVVEYYAR.

In terms of domain architecture, S4 RNA-binding spans 92–156 (RRLDALVLRS…SKVPFQVARE (65 aa)).

The protein belongs to the universal ribosomal protein uS4 family. In terms of assembly, part of the 30S ribosomal subunit. Contacts protein S5. The interaction surface between S4 and S5 is involved in control of translational fidelity.

One of the primary rRNA binding proteins, it binds directly to 16S rRNA where it nucleates assembly of the body of the 30S subunit. Its function is as follows. With S5 and S12 plays an important role in translational accuracy. This is Small ribosomal subunit protein uS4 from Streptomyces griseus subsp. griseus (strain JCM 4626 / CBS 651.72 / NBRC 13350 / KCC S-0626 / ISP 5235).